The sequence spans 156 residues: Protein SprT (156 aa).

The region spanning Asn15 to Leu153 is the SprT-like domain. His67 lines the Zn(2+) pocket. The active site involves Glu68. His71 provides a ligand contact to Zn(2+).

This sequence belongs to the SprT family. Requires Zn(2+) as cofactor.

It localises to the cytoplasm. This is Protein SprT from Glaesserella parasuis serovar 5 (strain SH0165) (Haemophilus parasuis).